The sequence spans 412 residues: UDP-galactose transporter homolog 1 (412 aa).

A helical membrane pass occupies residues 3 to 23 (VLRLAVCISGVYAAFLLWAIA). Residues 31-51 (FPSVHPHPHQQPHSPSDPPPG) form a disordered region. A run of 4 helical transmembrane segments spans residues 58 to 78 (LFLN…YLSF), 139 to 159 (LLAL…IGFL), 197 to 217 (YIVV…AETS), and 222 to 242 (GGSD…IDGL). Asparagine 244 is a glycosylation site (N-linked (GlcNAc...) asparagine). Helical transmembrane passes span 262-282 (MMFT…VLPL), 325-345 (SALA…LFIF), 355-375 (TLVM…VVVF), and 379-399 (LTKG…VEAG).

Belongs to the nucleotide-sugar transporter family. SLC35B subfamily.

It is found in the endoplasmic reticulum membrane. In terms of biological role, may be involved in specific transport of UDP-Gal from the cytosol to the Golgi lumen. Involved in the maintenance of optimal conditions for the folding of secretory pathway proteins in the endoplasmic reticulum. The sequence is that of UDP-galactose transporter homolog 1 (HUT1-A) from Cryptococcus neoformans var. neoformans serotype D (strain JEC21 / ATCC MYA-565) (Filobasidiella neoformans).